A 769-amino-acid chain; its full sequence is Glutathione biosynthesis bifunctional protein GshAB (769 aa).

Residues 1–347 are glutamate--cysteine ligase; sequence MLDSFKEDPN…QLADENENNI (347 aa). Residues 514 to 768 form the ATP-grasp domain; it reads KLVLAEHDIR…IGDKILDFLF (255 aa). Position 541-599 (541-599) interacts with ATP; the sequence is SLFEDKQIVVKPKSTNYGWGISIFKNKFTLEDYQEALNIAFSYDSSVIIEEFIPGDEFR. Residues Asp-721, Glu-738, and Asn-740 each contribute to the Mg(2+) site. Residues Asp-721, Glu-738, and Asn-740 each coordinate Mn(2+).

This sequence in the N-terminal section; belongs to the glutamate--cysteine ligase type 1 family. Type 2 subfamily. Monomer. It depends on Mg(2+) as a cofactor. The cofactor is Mn(2+).

It carries out the reaction L-cysteine + L-glutamate + ATP = gamma-L-glutamyl-L-cysteine + ADP + phosphate + H(+). It catalyses the reaction gamma-L-glutamyl-L-cysteine + glycine + ATP = glutathione + ADP + phosphate + H(+). The protein operates within sulfur metabolism; glutathione biosynthesis; glutathione from L-cysteine and L-glutamate: step 1/2. It functions in the pathway sulfur metabolism; glutathione biosynthesis; glutathione from L-cysteine and L-glutamate: step 2/2. Its function is as follows. Synthesizes glutathione from L-glutamate and L-cysteine via gamma-L-glutamyl-L-cysteine. This is Glutathione biosynthesis bifunctional protein GshAB from Listeria monocytogenes serovar 1/2a (strain ATCC BAA-679 / EGD-e).